The primary structure comprises 735 residues: Alpha-adducin (735 aa).

N-acetylmethionine is present on Met-1. The segment covering 1–11 has biased composition (low complexity); it reads MNGDTRAAVVT. The tract at residues 1-21 is disordered; it reads MNGDTRAAVVTSPPPTTAPHK. Phosphoserine occurs at positions 12, 59, and 64. Thr-331 carries the post-translational modification Phosphothreonine. Phosphoserine occurs at positions 334, 353, and 355. A Phosphothreonine modification is found at Thr-358. Residues Ser-364, Ser-366, Ser-408, and Ser-427 each carry the phosphoserine modification. Disordered stretches follow at residues 418–487 and 576–735; these read GHSF…AVPN and RREV…KSDS. Position 429 is a phosphothreonine (Thr-429). A phosphoserine mark is found at Ser-431 and Ser-436. The span at 440-455 shows a compositional bias: basic and acidic residues; the sequence is QQREKTRWLHSGRGDD. Thr-445 carries the post-translational modification Phosphothreonine; by ROCK2. Ser-464 and Ser-465 each carry phosphoserine. The residue at position 480 (Thr-480) is a Phosphothreonine; by ROCK2. Ser-481 is modified (phosphoserine; by PKA). The segment covering 576 to 601 has biased composition (basic and acidic residues); it reads RREVERKQKGSEENLDETREQKEKSP. A phosphoserine mark is found at Ser-586, Ser-600, and Ser-605. Position 610 is a phosphothreonine (Thr-610). Position 613 is a phosphoserine (Ser-613). At Thr-614 the chain carries Phosphothreonine. The segment covering 698 to 712 has biased composition (low complexity); sequence GSPMDPGSDGSPGKS. Residues Ser-705, Ser-708, and Ser-712 each carry the phosphoserine modification. A compositionally biased stretch (basic residues) spans 713–735; that stretch reads PSKKKKKFRTPSFLKKSKKKSDS. Position 714 is a phosphoserine; by PKC (Ser-714). Positions 715-732 are interaction with calmodulin; sequence KKKKKFRTPSFLKKSKKK. Position 724 is a phosphoserine; by PKA and PKC (Ser-724).

It belongs to the aldolase class II family. Adducin subfamily. In terms of assembly, heterodimer of an alpha and a beta subunit or an alpha and a gamma subunit.

Its subcellular location is the cytoplasm. It is found in the cytoskeleton. The protein localises to the cell membrane. Its function is as follows. Membrane-cytoskeleton-associated protein that promotes the assembly of the spectrin-actin network. Binds to calmodulin. This is Alpha-adducin (Add1) from Mus musculus (Mouse).